Consider the following 234-residue polypeptide: Sugar fermentation stimulation protein A (234 aa).

The H-T-H motif DNA-binding region spans 201 to 220 (LLSEAQQRGVEILAYKAEIS).

It belongs to the SfsA family.

Binds to DNA non-specifically. Could be a regulatory factor involved in maltose metabolism. The polypeptide is Sugar fermentation stimulation protein A (Escherichia coli (strain 55989 / EAEC)).